We begin with the raw amino-acid sequence, 665 residues long: MITQKDYEKLCHEIWHHNKLYYIEHQPIISDEEFDALLKKLEEIERSHPEWITEFSPSQRVNESLTSGFKTVAHRTPMLSLANTYSKEEIEDFIKRLQKLVGKRQVEFSVELKMDGIAITAIYEQGIFKRGITRGNGKRGDDITTNMRMIENLPLQLSGENLPDFLEIRGEVFMPRQVFLQLNEQKLQDGEVLWANPRNAAAGSLKLLDPKMVAERRLAVVFYGLAEDSSASIKKQAEVPSFFRSIGLPALEHHAYCQNIEQIWKFAEEIRSLRTILPYDIDGIVIKLNDFKDQKRLGVTGKSPRWAIAYKFAAEQAKTRIIDITVQIGRTGVLTPVAELEPIFLSGSTIARASLYNQEEVQRKDIRIGDLVTIEKGGDVIPKVLNVELSQRPLHSQPWQMPLYCPSCGTQVINIIGEVAVRCPNEDSCTEQQIRKLIYFVGKQAMDIKHMGEKIVIQLFQKGFIHLPSDIFALTEGQISQLTNFKTKAIQNLMRSIEESKHVSLERFIMALEIKYIGIGTAELLAARAGTIETLMQLNEEDLIKIEGVGGKVAQAVVEHFQNPKHRQEVYRLLELGVCPQSKTVQIFTNHAFQGKIFVLTGSLEHYTRQSAASLIKERGGKVSDSVSRKTNYVVAGAEPGSKLDKARTLGIPVLNEKEFISLCH.

NAD(+)-binding positions include 31 to 35, 80 to 81, and Glu-111; these read DEEFD and SL. Catalysis depends on Lys-113, which acts as the N6-AMP-lysine intermediate. NAD(+)-binding residues include Arg-134, Glu-171, Lys-287, and Lys-311. Zn(2+)-binding residues include Cys-405, Cys-408, Cys-423, and Cys-429. Positions 588–665 constitute a BRCT domain; the sequence is FTNHAFQGKI…NEKEFISLCH (78 aa).

Belongs to the NAD-dependent DNA ligase family. LigA subfamily. Mg(2+) is required as a cofactor. It depends on Mn(2+) as a cofactor.

It catalyses the reaction NAD(+) + (deoxyribonucleotide)n-3'-hydroxyl + 5'-phospho-(deoxyribonucleotide)m = (deoxyribonucleotide)n+m + AMP + beta-nicotinamide D-nucleotide.. Functionally, DNA ligase that catalyzes the formation of phosphodiester linkages between 5'-phosphoryl and 3'-hydroxyl groups in double-stranded DNA using NAD as a coenzyme and as the energy source for the reaction. It is essential for DNA replication and repair of damaged DNA. The chain is DNA ligase from Protochlamydia amoebophila (strain UWE25).